The sequence spans 260 residues: MRILVTNDDGISAPGLAVLEQIATELAGPEGEVWIVAPAFEQSGVGHCISYTHPSILSELGPRRFAAEGSPADCVLAALHVVMKDTPPDLILSGVNRGNNSAENALYSGTLGGAMEGALQGVPAMALSQYYGSGNRDLENPFEAARAHGAEVVRKLLSATPQNDSPYRLFYNINFPPVAAGDVKGIKVTTQGCRSGKRFSAEEQFSPNGKRFIWVKGGDQQVSTAPETDAAANLDGFISVTPMRADLTAHDAVEALKAIE.

Positions 8, 9, 43, and 96 each coordinate a divalent metal cation.

The protein belongs to the SurE nucleotidase family. The cofactor is a divalent metal cation.

It is found in the cytoplasm. It carries out the reaction a ribonucleoside 5'-phosphate + H2O = a ribonucleoside + phosphate. Its function is as follows. Nucleotidase that shows phosphatase activity on nucleoside 5'-monophosphates. The polypeptide is 5'-nucleotidase SurE (Ruegeria sp. (strain TM1040) (Silicibacter sp.)).